The following is a 459-amino-acid chain: tRNA modification GTPase MnmE (459 aa).

3 residues coordinate (6S)-5-formyl-5,6,7,8-tetrahydrofolate: arginine 22, glutamate 87, and arginine 126. The region spanning 221-381 is the TrmE-type G domain; the sequence is GINVAICGKP…LEESIEKAVL (161 aa). Residue asparagine 231 coordinates K(+). Residues 231–236, 250–256, and 275–278 contribute to the GTP site; these read NVGKSS, TSIPGTT, and DTAG. Serine 235 lines the Mg(2+) pocket. Threonine 250, isoleucine 252, and threonine 255 together coordinate K(+). Residue threonine 256 coordinates Mg(2+). Lysine 459 is a (6S)-5-formyl-5,6,7,8-tetrahydrofolate binding site.

Belongs to the TRAFAC class TrmE-Era-EngA-EngB-Septin-like GTPase superfamily. TrmE GTPase family. Homodimer. Heterotetramer of two MnmE and two MnmG subunits. It depends on K(+) as a cofactor.

Its subcellular location is the cytoplasm. Its function is as follows. Exhibits a very high intrinsic GTPase hydrolysis rate. Involved in the addition of a carboxymethylaminomethyl (cmnm) group at the wobble position (U34) of certain tRNAs, forming tRNA-cmnm(5)s(2)U34. The chain is tRNA modification GTPase MnmE from Syntrophomonas wolfei subsp. wolfei (strain DSM 2245B / Goettingen).